Here is a 162-residue protein sequence, read N- to C-terminus: Phosphopantetheine adenylyltransferase (162 aa).

Ser11 contacts substrate. Residues 11 to 12 (SF) and His19 contribute to the ATP site. 3 residues coordinate substrate: Lys43, Val76, and Arg90. ATP is bound by residues 91–93 (GLR), Glu101, and 126–132 (HLYISSS).

This sequence belongs to the bacterial CoaD family. As to quaternary structure, homohexamer. Mg(2+) is required as a cofactor.

It localises to the cytoplasm. The enzyme catalyses (R)-4'-phosphopantetheine + ATP + H(+) = 3'-dephospho-CoA + diphosphate. The protein operates within cofactor biosynthesis; coenzyme A biosynthesis; CoA from (R)-pantothenate: step 4/5. In terms of biological role, reversibly transfers an adenylyl group from ATP to 4'-phosphopantetheine, yielding dephospho-CoA (dPCoA) and pyrophosphate. This chain is Phosphopantetheine adenylyltransferase, found in Streptococcus pneumoniae (strain 70585).